The sequence spans 436 residues: tRNA-2-methylthio-N(6)-dimethylallyladenosine synthase (436 aa).

One can recognise an MTTase N-terminal domain in the interval 5–121 (RKLFIKTYGC…LPDMLDRTEG (117 aa)). 6 residues coordinate [4Fe-4S] cluster: cysteine 14, cysteine 50, cysteine 84, cysteine 158, cysteine 162, and cysteine 165. The Radical SAM core domain maps to 144–374 (ATRGPAAFLT…TEQQRAAQMA (231 aa)). A TRAM domain is found at 373-435 (MAMVGREVGV…PNSLAGERLG (63 aa)).

This sequence belongs to the methylthiotransferase family. MiaB subfamily. In terms of assembly, monomer. The cofactor is [4Fe-4S] cluster.

Its subcellular location is the cytoplasm. It catalyses the reaction N(6)-dimethylallyladenosine(37) in tRNA + (sulfur carrier)-SH + AH2 + 2 S-adenosyl-L-methionine = 2-methylsulfanyl-N(6)-dimethylallyladenosine(37) in tRNA + (sulfur carrier)-H + 5'-deoxyadenosine + L-methionine + A + S-adenosyl-L-homocysteine + 2 H(+). Functionally, catalyzes the methylthiolation of N6-(dimethylallyl)adenosine (i(6)A), leading to the formation of 2-methylthio-N6-(dimethylallyl)adenosine (ms(2)i(6)A) at position 37 in tRNAs that read codons beginning with uridine. The sequence is that of tRNA-2-methylthio-N(6)-dimethylallyladenosine synthase from Cereibacter sphaeroides (strain ATCC 17029 / ATH 2.4.9) (Rhodobacter sphaeroides).